A 425-amino-acid chain; its full sequence is Serine--tRNA ligase (425 aa).

233 to 235 contributes to the L-serine binding site; that stretch reads TAE. 264–266 contacts ATP; the sequence is RRE. E287 serves as a coordination point for L-serine. 351–354 is an ATP binding site; the sequence is EISS. Residue S385 coordinates L-serine.

Belongs to the class-II aminoacyl-tRNA synthetase family. Type-1 seryl-tRNA synthetase subfamily. Homodimer. The tRNA molecule binds across the dimer.

The protein resides in the cytoplasm. It catalyses the reaction tRNA(Ser) + L-serine + ATP = L-seryl-tRNA(Ser) + AMP + diphosphate + H(+). It carries out the reaction tRNA(Sec) + L-serine + ATP = L-seryl-tRNA(Sec) + AMP + diphosphate + H(+). The protein operates within aminoacyl-tRNA biosynthesis; selenocysteinyl-tRNA(Sec) biosynthesis; L-seryl-tRNA(Sec) from L-serine and tRNA(Sec): step 1/1. Functionally, catalyzes the attachment of serine to tRNA(Ser). Is also able to aminoacylate tRNA(Sec) with serine, to form the misacylated tRNA L-seryl-tRNA(Sec), which will be further converted into selenocysteinyl-tRNA(Sec). In Prochlorococcus marinus (strain SARG / CCMP1375 / SS120), this protein is Serine--tRNA ligase.